Reading from the N-terminus, the 291-residue chain is Protein ILRUN (291 aa).

Positions 199 to 291 are disordered; it reads NTQPHRKVEG…LHGPYPFGQS (93 aa). Residues 212–228 are compositionally biased toward polar residues; that stretch reads PFASPQKNRQSDENNLT. A phosphoserine mark is found at Ser-215, Ser-222, and Ser-265. Over residues 257–276 the composition is skewed to low complexity; that stretch reads LSQSSVNLSPSSPANNLSVV.

As to quaternary structure, interacts with IRF3; the interaction inhibits IRF3 binding to its DNA consensus sequence.

The protein resides in the cytoplasm. The protein localises to the nucleus. Functionally, negative regulator of innate antiviral response. Blocks IRF3-dependent cytokine production such as IFNA, IFNB and TNF. Interacts with IRF3 and inhibits IRF3 recruitment to type I IFN promoter sequences while also reducing nuclear levels of the coactivators EP300 and CREBBP. The polypeptide is Protein ILRUN (Mus musculus (Mouse)).